Here is a 112-residue protein sequence, read N- to C-terminus: UPF0145 protein CD630_17110 (112 aa).

This sequence belongs to the UPF0145 family.

In Clostridioides difficile (strain 630) (Peptoclostridium difficile), this protein is UPF0145 protein CD630_17110.